The primary structure comprises 323 residues: Beta-ketoacyl-[acyl-carrier-protein] synthase III (323 aa).

Residues Cys-113 and His-250 contribute to the active site. The ACP-binding stretch occupies residues 251–255; sequence QANKR. Asn-280 is a catalytic residue.

This sequence belongs to the thiolase-like superfamily. FabH family. Homodimer.

It is found in the cytoplasm. The catalysed reaction is malonyl-[ACP] + acetyl-CoA + H(+) = 3-oxobutanoyl-[ACP] + CO2 + CoA. It participates in lipid metabolism; fatty acid biosynthesis. Functionally, catalyzes the condensation reaction of fatty acid synthesis by the addition to an acyl acceptor of two carbons from malonyl-ACP. Catalyzes the first condensation reaction which initiates fatty acid synthesis and may therefore play a role in governing the total rate of fatty acid production. Possesses both acetoacetyl-ACP synthase and acetyl transacylase activities. Its substrate specificity determines the biosynthesis of branched-chain and/or straight-chain of fatty acids. The polypeptide is Beta-ketoacyl-[acyl-carrier-protein] synthase III (Brucella canis (strain ATCC 23365 / NCTC 10854 / RM-666)).